Here is a 267-residue protein sequence, read N- to C-terminus: Mlc titration factor A (267 aa).

Zn(2+) contacts are provided by histidine 111, histidine 148, histidine 152, and glutamate 211.

This sequence belongs to the MtfA family. Interacts with Mlc. It depends on Zn(2+) as a cofactor.

The protein resides in the cytoplasm. Involved in the modulation of the activity of the glucose-phosphotransferase system (glucose-PTS). Interacts with the transcriptional repressor Mlc, preventing its interaction with DNA and leading to the modulation of expression of genes regulated by Mlc, including ptsG, which encodes the PTS system glucose-specific EIICB component. Functionally, shows zinc-dependent metallopeptidase activity. The protein is Mlc titration factor A of Yersinia enterocolitica serotype O:8 / biotype 1B (strain NCTC 13174 / 8081).